The primary structure comprises 86 residues: Putative defensin-like protein 234 (86 aa).

Residues 1–26 (MRSATLLLVSCVLLSFILGNVKEVEA) form the signal peptide. 4 cysteine pairs are disulfide-bonded: C34–C86, C44–C71, C52–C80, and C69–C82.

This sequence belongs to the DEFL family.

Its subcellular location is the secreted. The protein is Putative defensin-like protein 234 (SCRL14) of Arabidopsis thaliana (Mouse-ear cress).